The following is a 1090-amino-acid chain: Protein unc-13 homolog D (1090 aa).

One can recognise a C2 1 domain in the interval 92–239; sequence EPEEHQQTLQ…FKEARKDKGQ (148 aa). Ca(2+) is bound by residues Asp-127 and Asp-133. Residue Ser-150 is modified to Phosphoserine. Asp-206 and Asp-208 together coordinate Ca(2+). Residues 240–543 form an interaction with RAB27A region; it reads DDFLGNVVLR…AKRVQDHTTV (304 aa). The MHD1 domain occupies 557–677; it reads FQLYISLKEL…RLALVYCSLI (121 aa). One can recognise an MHD2 domain in the interval 788-895; that stretch reads EDAILPLMKF…ASSRELIRKY (108 aa). The C2 2 domain occupies 910–1035; the sequence is ELGAVTVKAS…PGLSGSEEPG (126 aa). Residues Leu-940, Asp-941, Asp-947, Asp-1005, Asp-1007, and Asp-1013 each contribute to the Ca(2+) site. The tract at residues 1026-1048 is disordered; it reads PGLSGSEEPGEVPQTRLPLTYPA.

Belongs to the unc-13 family. In terms of assembly, interacts with DOC2A. Interacts with RAB27A. Interacts with RHOG; the interaction increases RhoG affinity to the membrane lipids, targets UNC13D to membrane lipids and facilitates cytotoxic granule (CG) docking to the plasma membrane. Requires Ca(2+) as cofactor. As to expression, expressed at high levels in spleen, thymus and leukocytes. Also expressed in lung and placenta, and at very low levels in brain, heart, skeletal muscle and kidney. Expressed in cytotoxic T-lymphocytes (CTL) and mast cells.

The protein resides in the cytoplasm. Its subcellular location is the membrane. It localises to the late endosome. It is found in the recycling endosome. The protein localises to the lysosome. Functionally, plays a role in cytotoxic granule exocytosis in lymphocytes. Required for both granule maturation and granule docking and priming at the immunologic synapse. Regulates assembly of recycling and late endosomal structures, leading to the formation of an endosomal exocytic compartment that fuses with perforin-containing granules at the immunologic synapse and licences them for exocytosis. Regulates Ca(2+)-dependent secretory lysosome exocytosis in mast cells. This Homo sapiens (Human) protein is Protein unc-13 homolog D (UNC13D).